A 744-amino-acid chain; its full sequence is Phosphoribosylformylglycinamidine synthase subunit PurL (744 aa).

His50 is a catalytic residue. The ATP site is built by Tyr53 and Lys92. Glu94 is a Mg(2+) binding site. Residues 95–98 (SHNH) and Arg117 contribute to the substrate site. The active-site Proton acceptor is His96. Residue Asp118 participates in Mg(2+) binding. Gln241 is a binding site for substrate. Asp269 lines the Mg(2+) pocket. Residue 313 to 315 (ESQ) coordinates substrate. ATP contacts are provided by Asp495 and Gly532. Residue Asn533 coordinates Mg(2+). Ser535 is a binding site for substrate.

The protein belongs to the FGAMS family. In terms of assembly, monomer. Part of the FGAM synthase complex composed of 1 PurL, 1 PurQ and 2 PurS subunits.

The protein localises to the cytoplasm. The catalysed reaction is N(2)-formyl-N(1)-(5-phospho-beta-D-ribosyl)glycinamide + L-glutamine + ATP + H2O = 2-formamido-N(1)-(5-O-phospho-beta-D-ribosyl)acetamidine + L-glutamate + ADP + phosphate + H(+). It participates in purine metabolism; IMP biosynthesis via de novo pathway; 5-amino-1-(5-phospho-D-ribosyl)imidazole from N(2)-formyl-N(1)-(5-phospho-D-ribosyl)glycinamide: step 1/2. Its function is as follows. Part of the phosphoribosylformylglycinamidine synthase complex involved in the purines biosynthetic pathway. Catalyzes the ATP-dependent conversion of formylglycinamide ribonucleotide (FGAR) and glutamine to yield formylglycinamidine ribonucleotide (FGAM) and glutamate. The FGAM synthase complex is composed of three subunits. PurQ produces an ammonia molecule by converting glutamine to glutamate. PurL transfers the ammonia molecule to FGAR to form FGAM in an ATP-dependent manner. PurS interacts with PurQ and PurL and is thought to assist in the transfer of the ammonia molecule from PurQ to PurL. The chain is Phosphoribosylformylglycinamidine synthase subunit PurL from Rhizobium johnstonii (strain DSM 114642 / LMG 32736 / 3841) (Rhizobium leguminosarum bv. viciae).